The primary structure comprises 63 residues: uncharacterized protein (63 aa).

This is an uncharacterized protein from Dictyostelium discoideum (Social amoeba).